The chain runs to 145 residues: D-aminoacyl-tRNA deacylase (145 aa).

The short motif at 137–138 is the Gly-cisPro motif, important for rejection of L-amino acids element; that stretch reads GP.

Belongs to the DTD family. In terms of assembly, homodimer.

It is found in the cytoplasm. It catalyses the reaction glycyl-tRNA(Ala) + H2O = tRNA(Ala) + glycine + H(+). It carries out the reaction a D-aminoacyl-tRNA + H2O = a tRNA + a D-alpha-amino acid + H(+). In terms of biological role, an aminoacyl-tRNA editing enzyme that deacylates mischarged D-aminoacyl-tRNAs. Also deacylates mischarged glycyl-tRNA(Ala), protecting cells against glycine mischarging by AlaRS. Acts via tRNA-based rather than protein-based catalysis; rejects L-amino acids rather than detecting D-amino acids in the active site. By recycling D-aminoacyl-tRNA to D-amino acids and free tRNA molecules, this enzyme counteracts the toxicity associated with the formation of D-aminoacyl-tRNA entities in vivo and helps enforce protein L-homochirality. The polypeptide is D-aminoacyl-tRNA deacylase (Francisella tularensis subsp. novicida (strain U112)).